A 698-amino-acid polypeptide reads, in one-letter code: Topoisomerase subunit TopoN (698 aa).

An Isoglutamyl lysine isopeptide (Lys-Gln) (interchain with Q-Cter in protein Pup) cross-link involves residue Lys429. The segment at 443–473 is disordered; the sequence is GAKARARAASKAKGLGTNLSLPPKLLPSRES. Residues 479-593 form the Toprim domain; the sequence is AELFLCEGDS…AGMVYVTMPP (115 aa).

Belongs to the type II topoisomerase family. A complex of TopoN and TopoM, possibly a heterotetramer. Requires Mg(2+) as cofactor.

The enzyme catalyses ATP-dependent breakage, passage and rejoining of double-stranded DNA.. Its activity is regulated as follows. Inhibited by quinolone antibiotic ciprofloxacin and coumarin antibiotic novobiocin, but at much higher concentrations than is usual for DNA gyrase/topoisomerase. Its function is as follows. Catalyzes the relaxation of negatively supercoiled DNA in the presence of ATP or dATP but not other nucleotides. Individual subunits have no activity. Not able to negatively supercoil DNA, it can however introduce positive supercoils in DNA. Relaxes positive supercoils in an ATP-dependent manner. Catenates and decatenates DNA. Generates dsDNA breaks in the presence of the quinolone antibiotic ciprofloxacin, showing it is a topoisomerase. This is Topoisomerase subunit TopoN from Mycolicibacterium smegmatis (strain ATCC 700084 / mc(2)155) (Mycobacterium smegmatis).